A 460-amino-acid polypeptide reads, in one-letter code: V-type ATP synthase beta chain (460 aa).

It belongs to the ATPase alpha/beta chains family.

Produces ATP from ADP in the presence of a proton gradient across the membrane. The V-type beta chain is a regulatory subunit. This is V-type ATP synthase beta chain from Acetivibrio thermocellus (strain ATCC 27405 / DSM 1237 / JCM 9322 / NBRC 103400 / NCIMB 10682 / NRRL B-4536 / VPI 7372) (Clostridium thermocellum).